The following is a 247-amino-acid chain: LHFPL tetraspan subfamily member 4 protein (247 aa).

The next 4 helical transmembrane spans lie at 22–42 (IGVL…VVFI), 97–117 (FFVL…ALFF), 127–147 (ICAW…MIFP), and 178–198 (ILAI…FVLG).

It belongs to the LHFP family. In terms of assembly, interacts with GABA(A) receptor subunits. Interacts with GABRB3. Interacts with GABRA2. Interacts with GABRG2. Interacts with GABRA1. Identified in a complex of 720 kDa composed of LHFPL4, NLGN2, GABRA1, GABRB2, GABRG2 and GABRB3. Interacts with NLGN2; leading to mutual regulation of protein level and synaptic clustering. In terms of tissue distribution, highly expressed in the brain, including the cortex, hippocampus, midbrain, olfactory bulb pona plus medulla (at protein level). Expressed in the in the cerebellar granular layer and in granular layer. Colocalized with GPHN at inhibitory synapses. Weakly expressed in heart, testis, lung, intestine, vagina, ovary and uterus.

The protein resides in the cell projection. Its subcellular location is the dendrite. It is found in the postsynaptic cell membrane. In terms of biological role, plays a role in the regulation of inhibitory synapse formation and function by being involved in maintening gamma-aminobutyric acid receptors (GABAARs) clustering and their associated scaffold proteins at inhibitory synaptic sites. Acts in concert with NLGN2 to recruit or stabilize GABAARs. The chain is LHFPL tetraspan subfamily member 4 protein from Mus musculus (Mouse).